We begin with the raw amino-acid sequence, 368 residues long: Histidinol-phosphate aminotransferase (368 aa).

Lysine 228 is subject to N6-(pyridoxal phosphate)lysine.

It belongs to the class-II pyridoxal-phosphate-dependent aminotransferase family. Histidinol-phosphate aminotransferase subfamily. Pyridoxal 5'-phosphate serves as cofactor.

The enzyme catalyses L-histidinol phosphate + 2-oxoglutarate = 3-(imidazol-4-yl)-2-oxopropyl phosphate + L-glutamate. The protein operates within amino-acid biosynthesis; L-histidine biosynthesis; L-histidine from 5-phospho-alpha-D-ribose 1-diphosphate: step 7/9. The chain is Histidinol-phosphate aminotransferase from Methanosarcina mazei (strain ATCC BAA-159 / DSM 3647 / Goe1 / Go1 / JCM 11833 / OCM 88) (Methanosarcina frisia).